Reading from the N-terminus, the 709-residue chain is ATP-binding cassette sub-family F member 3 (709 aa).

A2 bears the N-acetylalanine mark. Phosphoserine is present on S83. Over residues 129–143 the composition is skewed to basic and acidic residues; sequence RLKAKQEKRSEKDTL. Positions 129–171 are disordered; the sequence is RLKAKQEKRSEKDTLKTSNPLVLEEASASQAGSRKESRLESSG. Residues S155, S157, and S161 each carry the phosphoserine modification. Residues 161 to 171 are compositionally biased toward basic and acidic residues; the sequence is SRKESRLESSG. ABC transporter domains follow at residues 178-424 and 492-707; these read VRIE…LNQQ and LQLD…RREG. 210-217 is a binding site for ATP; it reads GRNGLGKT. S283 carries the phosphoserine modification. 525–532 lines the ATP pocket; it reads GENGAGKS.

It belongs to the ABC transporter superfamily. ABCF family. EF3 subfamily.

In terms of biological role, displays an antiviral effect against flaviviruses in the presence of OAS1B. This chain is ATP-binding cassette sub-family F member 3 (ABCF3), found in Pongo abelii (Sumatran orangutan).